We begin with the raw amino-acid sequence, 569 residues long: Urease subunit beta (569 aa).

The 439-residue stretch at 131-569 (GGIDTHIHFI…VSLAQLFSIF (439 aa)) folds into the Urease domain. The Ni(2+) site is built by histidine 136, histidine 138, and lysine 219. Lysine 219 is subject to N6-carboxylysine. Histidine 221 contacts substrate. Ni(2+)-binding residues include histidine 248 and histidine 274. Histidine 322 acts as the Proton donor in catalysis. Aspartate 362 contacts Ni(2+).

Belongs to the metallo-dependent hydrolases superfamily. Urease alpha subunit family. As to quaternary structure, heterohexamer of 3 UreA (alpha) and 3 UreB (beta) subunits. It depends on Ni cation as a cofactor. Carboxylation allows a single lysine to coordinate two nickel ions.

The protein resides in the cytoplasm. The catalysed reaction is urea + 2 H2O + H(+) = hydrogencarbonate + 2 NH4(+). The protein operates within nitrogen metabolism; urea degradation; CO(2) and NH(3) from urea (urease route): step 1/1. The sequence is that of Urease subunit beta from Helicobacter pylori (strain Shi470).